A 463-amino-acid chain; its full sequence is MSEVINLSLSQRANHLSAHLYNNQEAHLPYSKTATVDYDNSVFLSTSKNPNGTVNYSPRSLNYDLTRGYGSLGKYEYYESKADILGQYEVIQTGEKMDKNEYQKALDKGMNKSNTLNVNNTKYWTDYNKLIYSPKSLNQLNNWEYKPHDFGINRSFPNLKFDTFNKGKEEYHQYSEDSLENFRNTLEQCDLIQGVNLISELDSAWGGFTNELLVDLKDEFFNNGINSKYNIWVHGLINHNLNPKLNQLYSRINSIIELSFNSTLFFPMNLNSSSECLGVKMSVIEDELLRGFDKRNIVNEIKIHKNKQASNDFGMVDIDRANLYNLVDNIKIKDKPDSIDLSLSDSKNSKYFAKSYIIPNDQSLAESLNKKENFPINIYKNNRINDILNNDTFPNILEDKSVYSEFSSSNTLKNDLKFYREVIKRSRENEVIEDKFELIEKISELIEEYTIGYDESDEEYDSN.

It belongs to the misato family.

The protein resides in the mitochondrion. Involved in the partitioning of the mitochondrial organelle and mitochondrial DNA (mtDNA) inheritance. This chain is Protein DML1 (DML1), found in Debaryomyces hansenii (strain ATCC 36239 / CBS 767 / BCRC 21394 / JCM 1990 / NBRC 0083 / IGC 2968) (Yeast).